The primary structure comprises 439 residues: Ribosomal protein uS12 methylthiotransferase RimO (439 aa).

One can recognise an MTTase N-terminal domain in the interval 7–119 (KQLCLISLGC…IDIMIAKKQN (113 aa)). [4Fe-4S] cluster is bound by residues Cys16, Cys50, Cys82, Cys151, Cys155, and Cys158. The Radical SAM core domain occupies 137–368 (TGSSVHAYVK…ALKHQNHSFK (232 aa)).

Belongs to the methylthiotransferase family. RimO subfamily. The cofactor is [4Fe-4S] cluster.

The protein resides in the cytoplasm. It catalyses the reaction L-aspartate(89)-[ribosomal protein uS12]-hydrogen + (sulfur carrier)-SH + AH2 + 2 S-adenosyl-L-methionine = 3-methylsulfanyl-L-aspartate(89)-[ribosomal protein uS12]-hydrogen + (sulfur carrier)-H + 5'-deoxyadenosine + L-methionine + A + S-adenosyl-L-homocysteine + 2 H(+). In terms of biological role, catalyzes the methylthiolation of an aspartic acid residue of ribosomal protein uS12. The sequence is that of Ribosomal protein uS12 methylthiotransferase RimO from Helicobacter pylori (strain ATCC 700392 / 26695) (Campylobacter pylori).